A 141-amino-acid polypeptide reads, in one-letter code: Hemoglobin subunit alpha-D (141 aa).

The 141-residue stretch at 1–141 folds into the Globin domain; it reads VLTAEDRRLL…VADVLSEKYR (141 aa). His-57 and His-87 together coordinate heme b.

The protein belongs to the globin family. The deoxy-Hb is a heterotetramer of two alpha and two beta chains, but oxygenation results in dissociation to dimers. As to expression, red blood cells.

Involved in oxygen transport from the lung to the various peripheral tissues. This is Hemoglobin subunit alpha-D (HBAD) from Erythrolamprus miliaris (South American water snake).